A 178-amino-acid polypeptide reads, in one-letter code: MGKIIFYDDRNFQGRSYDCMSDCSDISSYLSRVGSIRVESGCFMVYERNSYMGNQFFLRRGEYHDMQRMMSMGMIFDTIRSCRMIPPYRGSYRMRIYERDNFGGQMHEVMDDCDNIMERYRMSDWQSCHVMDGHWLFYEQPHYRGRMWYFRPGEYRSFRDMGYSNMRFMSMRRITDIC.

2 Beta/gamma crystallin 'Greek key' domains span residues 2–40 and 41–86; these read GKII…RVES and GCFM…RMIP. Residues 87 to 91 are connecting peptide; sequence PYRGS. Beta/gamma crystallin 'Greek key' domains lie at 92–132 and 133–175; these read YRMR…HVMD and GHWL…RRIT.

Belongs to the beta/gamma-crystallin family. Monomer.

Crystallins are the dominant structural components of the vertebrate eye lens. The protein is Gamma-crystallin M1 of Cyprinus carpio (Common carp).